Reading from the N-terminus, the 410-residue chain is Inositol hexakisphosphate kinase 3 (410 aa).

211 to 219 (PCVLDLKMG) lines the substrate pocket. The interval 333 to 358 (QEPPERAPGSPHPHEAPQAAHGSSPG) is disordered.

The protein belongs to the inositol phosphokinase (IPK) family. As to expression, detected in brain.

Its subcellular location is the cytoplasm. The enzyme catalyses 1D-myo-inositol hexakisphosphate + ATP = 5-diphospho-1D-myo-inositol 1,2,3,4,6-pentakisphosphate + ADP. It catalyses the reaction 1-diphospho-1D-myo-inositol 2,3,4,5,6-pentakisphosphate + ATP + H(+) = 1,5-bis(diphospho)-1D-myo-inositol 2,3,4,6-tetrakisphosphate + ADP. In terms of biological role, converts inositol hexakisphosphate (InsP6) to diphosphoinositol pentakisphosphate (InsP7/PP-InsP5). Converts 1,3,4,5,6-pentakisphosphate (InsP5) to PP-InsP4. The polypeptide is Inositol hexakisphosphate kinase 3 (IP6K3) (Homo sapiens (Human)).